A 64-amino-acid polypeptide reads, in one-letter code: Phylloxin-S1 (64 aa).

The N-terminal stretch at 1 to 22 (MVFLKKSLLLVLFVGLVSLSIC) is a signal peptide. The propeptide occupies 23–44 (EENKREEHEEVEENAEKAEEKR). Gln-63 is subject to Glutamine amide.

Expressed by the skin glands.

Its subcellular location is the secreted. Antimicrobial peptide against both Gram-positive and Gram-negative bacteria. In Phyllomedusa sauvagei (Sauvage's leaf frog), this protein is Phylloxin-S1.